We begin with the raw amino-acid sequence, 362 residues long: Glutaminase-asparaginase (362 aa).

Positions 1 to 25 are cleaved as a signal peptide; it reads MKPLLHAFAPGVMALMLLLPQAAQA. An Asparaginase/glutaminase domain is found at 35-362; the sequence is SNVVILATGG…KELQRIFWEY (328 aa). The Acyl-ester intermediate role is filled by Thr-45. Residues Ser-92 and 125-126 each bind substrate; that span reads TD.

The protein belongs to the asparaginase 1 family. As to quaternary structure, homotetramer.

It localises to the periplasm. The enzyme catalyses L-glutamine + H2O = L-glutamate + NH4(+). It catalyses the reaction L-asparagine + H2O = L-aspartate + NH4(+). This Pseudomonas aeruginosa (strain ATCC 15692 / DSM 22644 / CIP 104116 / JCM 14847 / LMG 12228 / 1C / PRS 101 / PAO1) protein is Glutaminase-asparaginase (ansB).